The sequence spans 342 residues: MSAFTPASEVLLRHSDDFEQSRILFAGDLQDDLPARFECAASRAHTQQFHHWQVLSRQMGDNVRFSLVAQASDVADCDTLIYYWPKNKPEAQFQLMNILSLMPSGSDVFVVGENRSGVRSAEQMLADYAPLNKVDSARRCGLYHGRLEKQPQFSLESWWAEYNIDGLTIKTLPGVFSRDGLDVGSQLLLSTLTPHTKGKVLDVGCGAGVLSAALASHSPKVRLTLCDVSAPAVEASRATLAANGLEGEVFASNIFSEVKGRFDMIISNPPFHDGMQTSLDAAQTLIRGAVRHLNSGGELRIVANAFLPYPKILDETFGFHEVIAQTGRFKVYRTVMTRQAKK.

It belongs to the methyltransferase superfamily. RsmC family. In terms of assembly, monomer.

Its subcellular location is the cytoplasm. It catalyses the reaction guanosine(1207) in 16S rRNA + S-adenosyl-L-methionine = N(2)-methylguanosine(1207) in 16S rRNA + S-adenosyl-L-homocysteine + H(+). In terms of biological role, specifically methylates the guanine in position 1207 of 16S rRNA in the 30S particle. This Salmonella newport (strain SL254) protein is Ribosomal RNA small subunit methyltransferase C.